The sequence spans 49 residues: Large ribosomal subunit protein bL33B (49 aa).

It belongs to the bacterial ribosomal protein bL33 family.

The sequence is that of Large ribosomal subunit protein bL33B from Bacillus anthracis.